We begin with the raw amino-acid sequence, 510 residues long: NAD(P)H-quinone oxidoreductase subunit 2 B, chloroplastic (510 aa).

The next 12 helical transmembrane spans lie at 24-44 (LLLF…GLIL), 59-79 (WFYF…LFRW), 99-119 (IFQF…VEYI), 124-144 (MAIT…MFLC), 149-169 (LITI…LSGY), 183-203 (YLLM…WLYG), 229-249 (ISIA…PAPF), 295-315 (WHLL…LLAI), 323-343 (MLAY…IVGD), 354-374 (YMLF…LFGL), 395-415 (ALSL…AGFF), and 418-438 (LYLF…IGLL).

Belongs to the complex I subunit 2 family. In terms of assembly, NDH is composed of at least 16 different subunits, 5 of which are encoded in the nucleus.

It localises to the plastid. It is found in the chloroplast thylakoid membrane. The enzyme catalyses a plastoquinone + NADH + (n+1) H(+)(in) = a plastoquinol + NAD(+) + n H(+)(out). The catalysed reaction is a plastoquinone + NADPH + (n+1) H(+)(in) = a plastoquinol + NADP(+) + n H(+)(out). In terms of biological role, NDH shuttles electrons from NAD(P)H:plastoquinone, via FMN and iron-sulfur (Fe-S) centers, to quinones in the photosynthetic chain and possibly in a chloroplast respiratory chain. The immediate electron acceptor for the enzyme in this species is believed to be plastoquinone. Couples the redox reaction to proton translocation, and thus conserves the redox energy in a proton gradient. This is NAD(P)H-quinone oxidoreductase subunit 2 B, chloroplastic from Lolium perenne (Perennial ryegrass).